A 198-amino-acid chain; its full sequence is dITP/XTP pyrophosphatase (198 aa).

A substrate-binding site is contributed by 7 to 12 (TRNAGK). Mg(2+) contacts are provided by Glu40 and Asp69. The active-site Proton acceptor is Asp69. Substrate contacts are provided by residues Ser70, 152 to 155 (FGYD), Lys175, and 180 to 181 (HR).

Belongs to the HAM1 NTPase family. As to quaternary structure, homodimer. Mg(2+) serves as cofactor.

It carries out the reaction XTP + H2O = XMP + diphosphate + H(+). The catalysed reaction is dITP + H2O = dIMP + diphosphate + H(+). The enzyme catalyses ITP + H2O = IMP + diphosphate + H(+). Its function is as follows. Pyrophosphatase that catalyzes the hydrolysis of nucleoside triphosphates to their monophosphate derivatives, with a high preference for the non-canonical purine nucleotides XTP (xanthosine triphosphate), dITP (deoxyinosine triphosphate) and ITP. Seems to function as a house-cleaning enzyme that removes non-canonical purine nucleotides from the nucleotide pool, thus preventing their incorporation into DNA/RNA and avoiding chromosomal lesions. The protein is dITP/XTP pyrophosphatase of Exiguobacterium sibiricum (strain DSM 17290 / CCUG 55495 / CIP 109462 / JCM 13490 / 255-15).